The following is a 245-amino-acid chain: 4-hydroxy-tetrahydrodipicolinate reductase (245 aa).

NAD(+) contacts are provided by residues 7–12 (GAKGKV), 75–77 (GTT), and 102–105 (APNF). The active-site Proton donor/acceptor is H132. H133 is a (S)-2,3,4,5-tetrahydrodipicolinate binding site. The Proton donor role is filled by K136. Residue 142–143 (GT) participates in (S)-2,3,4,5-tetrahydrodipicolinate binding.

Belongs to the DapB family.

It is found in the cytoplasm. It catalyses the reaction (S)-2,3,4,5-tetrahydrodipicolinate + NAD(+) + H2O = (2S,4S)-4-hydroxy-2,3,4,5-tetrahydrodipicolinate + NADH + H(+). The enzyme catalyses (S)-2,3,4,5-tetrahydrodipicolinate + NADP(+) + H2O = (2S,4S)-4-hydroxy-2,3,4,5-tetrahydrodipicolinate + NADPH + H(+). It functions in the pathway amino-acid biosynthesis; L-lysine biosynthesis via DAP pathway; (S)-tetrahydrodipicolinate from L-aspartate: step 4/4. Catalyzes the conversion of 4-hydroxy-tetrahydrodipicolinate (HTPA) to tetrahydrodipicolinate. In Mycobacterium tuberculosis (strain ATCC 25177 / H37Ra), this protein is 4-hydroxy-tetrahydrodipicolinate reductase.